Consider the following 475-residue polypeptide: Tubulin gamma-1 chain (475 aa).

GTP is bound at residue 142–148 (AGGTGSG). The tract at residues 453–475 (VKRGNGPVDSKSEDSRSVTSAGS) is disordered.

This sequence belongs to the tubulin family. Interacts with Ote.

The protein resides in the cytoplasm. It is found in the cytoskeleton. Its subcellular location is the microtubule organizing center. It localises to the centrosome. The protein localises to the perinuclear region. Functionally, tubulin is the major constituent of microtubules. The gamma chain is found at microtubule organizing centers (MTOC) such as the spindle poles or the centrosome, suggesting that it is involved in the minus-end nucleation of microtubule assembly. In Drosophila melanogaster (Fruit fly), this protein is Tubulin gamma-1 chain (gammaTub23C).